We begin with the raw amino-acid sequence, 61 residues long: uncharacterized protein (61 aa).

It localises to the mitochondrion. This is an uncharacterized protein from Marchantia polymorpha (Common liverwort).